Here is a 342-residue protein sequence, read N- to C-terminus: tRNA-specific 2-thiouridylase MnmA (342 aa).

Residues 6 to 13 (LLSGGVDS) and Leu-32 contribute to the ATP site. The active-site Nucleophile is Cys-92. A disulfide bond links Cys-92 and Cys-191. Residue Gly-116 participates in ATP binding. Positions 138–140 (KDQ) are interaction with tRNA. Catalysis depends on Cys-191, which acts as the Cysteine persulfide intermediate. Residues 293–294 (RY) are interaction with tRNA.

It belongs to the MnmA/TRMU family.

It localises to the cytoplasm. The enzyme catalyses S-sulfanyl-L-cysteinyl-[protein] + uridine(34) in tRNA + AH2 + ATP = 2-thiouridine(34) in tRNA + L-cysteinyl-[protein] + A + AMP + diphosphate + H(+). In terms of biological role, catalyzes the 2-thiolation of uridine at the wobble position (U34) of tRNA, leading to the formation of s(2)U34. The chain is tRNA-specific 2-thiouridylase MnmA from Helicobacter pylori (strain G27).